The chain runs to 624 residues: MMNEALKKLEELLDKDQFEKIKAINNPYLHSFLAEWIQWLEPSKVYVCTDSEEDEEYVRWKALYYGEERMLEMVRHTVHYDNYYDQARDKQNTKLLVPKGTNLPFLNTMDREDGLREIREIMKGIMRGKELFIGFFVLGPKNSVFTIPAVQLTDSAYVMHSEFLLYRKGYEEFKRLGPTKNFLKFVHSAGELDERKTSKNLDKRRIYIDLVDETVYSANTQYGGNVIGLKKLAFRLTIQRAVREGWLSEHMFLMRVNGPNGRKTYFTGAYPSMCGKTSTAMIPWENIVGDDLVFIKNLDGVARAVNVEIGVFGIIEGINQKDDPIIWQVLHSPVEIIFSNVLVKDGKPYWNGMGIEIPDEGENHSGKWWRGKRDAEGKEIPPSHKNARFTVRLEAFPNLDREALENPCGVEVGGMIFGGRDPDTWPPVRESFNWDHGVITMGAALESETTAATLGKEGVRAFNPMSILDFLSVHIGDYLRNYLEFGRKLKKTPKIFAVNYFLRENGQWLNEKLDKAVWLKWMELRVHNDVGAIETPIGYIPRYEDLKVLFRQVLNKDYSREDYEKQFKIRVPELLAKIDRIWKIYEPIDNIPEELFQELEKERKRILEAREKYGDYISPFALEK.

Residues Arg-88 and 222 to 224 (YGG) each bind substrate. Residues Lys-231 and His-250 each coordinate Mn(2+). Ser-272 is a substrate binding site. 273-278 (MCGKTS) serves as a coordination point for GTP. Cys-274 is a catalytic residue. Asp-291 is a binding site for Mn(2+). Residue 386–388 (NAR) coordinates substrate. Arg-388 and Arg-420 together coordinate GTP.

Belongs to the phosphoenolpyruvate carboxykinase [GTP] family. Requires Mn(2+) as cofactor.

Its subcellular location is the cytoplasm. The catalysed reaction is oxaloacetate + GTP = phosphoenolpyruvate + GDP + CO2. It functions in the pathway carbohydrate biosynthesis; gluconeogenesis. In terms of biological role, catalyzes the conversion of oxaloacetate (OAA) to phosphoenolpyruvate (PEP), the rate-limiting step in the metabolic pathway that produces glucose from lactate and other precursors derived from the citric acid cycle. The protein is Phosphoenolpyruvate carboxykinase [GTP] of Pyrococcus furiosus (strain ATCC 43587 / DSM 3638 / JCM 8422 / Vc1).